We begin with the raw amino-acid sequence, 577 residues long: Vacuolar protein sorting-associated protein 45 (577 aa).

It belongs to the STXBP/unc-18/SEC1 family. In terms of assembly, interacts with PEP7 and TLG2.

It localises to the cytoplasm. Its subcellular location is the vacuole membrane. Its function is as follows. Essential for vacuolar protein sorting. Function in membrane traffic between the Golgi and the vacuole. The chain is Vacuolar protein sorting-associated protein 45 (VPS45) from Saccharomyces cerevisiae (strain ATCC 204508 / S288c) (Baker's yeast).